The primary structure comprises 264 residues: COP9 signalosome complex subunit 7b (264 aa).

The residue at position 2 (A2) is an N-acetylalanine. The PCI domain maps to 2-159 (AGEQKPSSNL…QLLEVDFCIG (158 aa)). A coiled-coil region spans residues 194 to 237 (RANQYKENHSRTQQQVEAEVTNIKKTLKATASSSAQEMEQQLAE). The span at 223-232 (TASSSAQEME) shows a compositional bias: polar residues. Positions 223–264 (TASSSAQEMEQQLAERECPPHAEQRQPTKKMSKVKGLVSSRH) are disordered. The span at 235 to 248 (LAERECPPHAEQRQ) shows a compositional bias: basic and acidic residues.

It belongs to the CSN7/EIF3M family. CSN7 subfamily. As to quaternary structure, component of the CSN complex, composed of COPS1/GPS1, COPS2, COPS3, COPS4, COPS5, COPS6, COPS7 (COPS7A or COPS7B), COPS8 and COPS9. In the complex, it probably interacts directly with COPS1, COPS2, COPS4, COPS5, COPS6 and COPS8. Interacts with EIF3S6.

It localises to the cytoplasm. It is found in the nucleus. Its function is as follows. Component of the COP9 signalosome complex (CSN), a complex involved in various cellular and developmental processes. The CSN complex is an essential regulator of the ubiquitin (Ubl) conjugation pathway by mediating the deneddylation of the cullin subunits of SCF-type E3 ligase complexes, leading to decrease the Ubl ligase activity of SCF-type complexes such as SCF, CSA or DDB2. The complex is also involved in phosphorylation of p53/TP53, JUN, I-kappa-B-alpha/NFKBIA, ITPK1 and IRF8/ICSBP, possibly via its association with CK2 and PKD kinases. CSN-dependent phosphorylation of TP53 and JUN promotes and protects degradation by the Ubl system, respectively. In Bos taurus (Bovine), this protein is COP9 signalosome complex subunit 7b (COPS7B).